A 334-amino-acid chain; its full sequence is UPF0104 membrane protein MTH_378 (334 aa).

8 consecutive transmembrane segments (helical) span residues Phe-7 to Ser-27, Val-33 to Ala-53, Phe-120 to Ile-140, Val-142 to Asn-162, Val-218 to Phe-238, Phe-247 to Pro-267, Met-277 to Val-297, and Ile-300 to Glu-320.

Belongs to the UPF0104 family.

The protein localises to the cell membrane. The sequence is that of UPF0104 membrane protein MTH_378 from Methanothermobacter thermautotrophicus (strain ATCC 29096 / DSM 1053 / JCM 10044 / NBRC 100330 / Delta H) (Methanobacterium thermoautotrophicum).